Consider the following 360-residue polypeptide: Epoxide hydrolase 3 (360 aa).

A helical membrane pass occupies residues 22–42 (AFMWSLVFSVALVAAAVYGCI). Asp173 (nucleophile) is an active-site residue. Tyr281 serves as the catalytic Proton donor. The active-site Proton acceptor is the His337.

This sequence belongs to the AB hydrolase superfamily. Epoxide hydrolase family.

It is found in the microsome membrane. The enzyme catalyses an epoxide + H2O = an ethanediol. The catalysed reaction is 9,10-epoxyoctadecanoate + H2O = 9,10-dihydroxyoctadecanoate. It catalyses the reaction 9,10-epoxy-(12Z)-octadecenoate + H2O = 9,10-dihydroxy-(12Z)-octadecenoate. It carries out the reaction 8,9-epoxy-(5Z,11Z,14Z)-eicosatrienoate + H2O = 8,9-dihydroxy-(5Z,11Z,14Z)-eicosatrienoate. The enzyme catalyses 11,12-epoxy-(5Z,8Z,14Z)-eicosatrienoate + H2O = 11,12-dihydroxy-(5Z,8Z,14Z)-eicosatrienoate. The catalysed reaction is 14,15-epoxy-(5Z,8Z,11Z)-eicosatrienoate + H2O = 14,15-dihydroxy-(5Z,8Z,11Z)-eicosatrienoate. With respect to regulation, inhibited by 1-(1-acetylpiperidin-4-yl)-3-(4-(trifl uoromethoxy)phenyl)urea (TPAU), 1-cyclohexyl-3-dodecylurea (CDU), 12-(3-adamantan-1-yl-ureido)-dodecanoic acid (AUDA), 1-((3S, 5S, 7S)-adamantan-1-yl)-3-(5-(2-(2-ethoxyethoxy) ethoxy)pentyl)urea (AEPU) and to a lesser extent by 8-(3-((3S, 5S, 7S)-adamantan-1-yl)ureido) octanoic acid (AUOA). Functionally, catalyzes the hydrolysis of epoxide-containing fatty acids. Active in vitro against epoxyeicosatrienoic acids (EETs) including 8,9-EET, 9,10-EET, 11,12-EET and 14,15-EET and leukotoxin. In Homo sapiens (Human), this protein is Epoxide hydrolase 3 (EPHX3).